Consider the following 444-residue polypeptide: Putative methylesterase 13, chloroplastic (444 aa).

Disordered regions lie at residues 1–32, 49–90, and 124–176; these read MGNS…KYKY, PSLS…KDSH, and SVVY…QLVD. The transit peptide at 1–60 directs the protein to the chloroplast; it reads MGNSFTCISHEQEQRPKKSSGGGGNNSGKYKYVRRLSLMPSFRRRTLLPSLSCSGSSSTS. A compositionally biased stretch (low complexity) spans 49 to 64; the sequence is PSLSCSGSSSTSSSKK. Residues 65 to 82 show a composition bias toward basic residues; the sequence is GGIKAKTKKIRERHHHHH. A compositionally biased stretch (polar residues) spans 124 to 148; the sequence is SVVYPSAQPSGTSSGPVSAVQTPKK. Over residues 149 to 164 the composition is skewed to low complexity; the sequence is SSAGFVRSSSSRQRSS. In terms of domain architecture, AB hydrolase-1 spans 190 to 310; sequence FVLVHGGGFG…LFNQQLGSND (121 aa). Asp264 functions as the Acyl-ester intermediate in the catalytic mechanism. Residues Asp390 and His418 each act as charge relay system in the active site.

The protein belongs to the AB hydrolase superfamily. Methylesterase family.

The protein resides in the plastid. It localises to the chloroplast. Its function is as follows. Putative methylesterase. This Arabidopsis thaliana (Mouse-ear cress) protein is Putative methylesterase 13, chloroplastic.